We begin with the raw amino-acid sequence, 498 residues long: Ammonium transporter 1 member 1 (498 aa).

The next 11 helical transmembrane spans lie at 39 to 59, 74 to 94, 120 to 140, 148 to 168, 192 to 212, 236 to 256, 274 to 296, 307 to 327, 331 to 351, 360 to 380, and 411 to 431; these read LLFS…LCAG, VLDA…FAFG, FFLF…GSIA, YLIY…HWIW, FAGS…GALI, LVVL…PGSF, SGVG…TTLF, VVDV…GCSV, WAAI…NALA, LEAA…TALF, and VIQI…LFYG.

The protein belongs to the ammonia transporter channel (TC 1.A.11.2) family. As to expression, expressed in roots and shoots.

Its subcellular location is the membrane. Ammonium transporter probably involved in ammonium uptake from the soil. The sequence is that of Ammonium transporter 1 member 1 (AMT1-1) from Oryza sativa subsp. japonica (Rice).